Consider the following 392-residue polypeptide: Glyceraldehyde-3-phosphate dehydrogenase A, chloroplastic (392 aa).

A chloroplast-targeting transit peptide spans 1 to 56; that stretch reads NSSLQVSNKGFSEFSGLRTSSAIPFGRKTNDDLLSVVAFQTSVIGGGNSKRGVVEA. NADP(+)-binding positions include 67 to 68, aspartate 91, and arginine 136; that span reads RI. D-glyceraldehyde 3-phosphate-binding positions include 208–210, threonine 239, arginine 254, 267–268, and arginine 290; these read SCT and TG. Catalysis depends on cysteine 209, which acts as the Nucleophile. Asparagine 372 contacts NADP(+).

It belongs to the glyceraldehyde-3-phosphate dehydrogenase family. Tetramer of either four A chains (GAPDH 2) or two A and two B chains (GAPDH 1).

It localises to the plastid. Its subcellular location is the chloroplast. The enzyme catalyses D-glyceraldehyde 3-phosphate + phosphate + NADP(+) = (2R)-3-phospho-glyceroyl phosphate + NADPH + H(+). The protein operates within carbohydrate biosynthesis; Calvin cycle. This Nicotiana tabacum (Common tobacco) protein is Glyceraldehyde-3-phosphate dehydrogenase A, chloroplastic (GAPA).